A 348-amino-acid polypeptide reads, in one-letter code: Galactose-1-phosphate uridylyltransferase (348 aa).

28–31 (RAKR) provides a ligand contact to UDP-alpha-D-glucose. C52 and C55 together coordinate Zn(2+). UDP-alpha-D-glucose is bound by residues V61 and 77–78 (ND). Residue H115 coordinates Zn(2+). UDP-alpha-D-glucose contacts are provided by residues N153 and 159-161 (GCS). Zn(2+) is bound at residue H164. H166 acts as the Tele-UMP-histidine intermediate in catalysis. Q168 is a binding site for UDP-alpha-D-glucose. Fe cation is bound by residues E182, H281, H296, and H298. UDP-alpha-D-glucose contacts are provided by residues 311–312 (KF), 316–317 (YE), and Q323.

It belongs to the galactose-1-phosphate uridylyltransferase type 1 family. In terms of assembly, homodimer. Requires Zn(2+) as cofactor.

It carries out the reaction alpha-D-galactose 1-phosphate + UDP-alpha-D-glucose = alpha-D-glucose 1-phosphate + UDP-alpha-D-galactose. It functions in the pathway carbohydrate metabolism; galactose metabolism. The sequence is that of Galactose-1-phosphate uridylyltransferase (galT) from Escherichia coli (strain K12).